Here is a 952-residue protein sequence, read N- to C-terminus: Chaperone protein ClpC2, chloroplastic (952 aa).

Residues 1-45 (MAWSIALLTPPFFGPGRHVQAKEYREPRGCVMKMSSLKAPVLRIQ) constitute a chloroplast transit peptide. The Clp R domain occupies 115-257 (FERFTEKAIK…RTQVIRMVGE (143 aa)). Repeat stretches follow at residues 118-183 (FTEK…IGRG) and 193-257 (FTPR…MVGE). The tract at residues 278–525 (LEEYGTNLTK…RVRLRHAQLP (248 aa)) is i. ATP is bound at residue 323–330 (GEPGVGKT). The 36-residue stretch at 532–567 (EKQLRQITKEKNEAVRSQDFEMAGSHRDREIELKAE) folds into the UVR domain. Positions 592–783 (VTESDIQHIV…LLIMTSNVGS (192 aa)) are II. Residue 666-673 (GPTGVGKS) coordinates ATP.

The protein belongs to the ClpA/ClpB family. ClpC subfamily. Homodimer and homohexamer. Hexamerization upon addition of ATP. Interacts with CLPT1. Interacts with CLPS1. Stably associated with the import machinery. Interacts with CLPF. Mg(2+) serves as cofactor. In terms of tissue distribution, expressed at low levels in roots and inflorescences. Expressed at very low levels in rosette leaves. Expressed in photosynthetic green tissues with high levels in young, developing leaf tissues.

Its subcellular location is the plastid. It is found in the chloroplast stroma. The protein localises to the chloroplast membrane. It catalyses the reaction ATP + H2O = ADP + phosphate + H(+). In terms of biological role, molecular chaperone. May act as a suppressor of FtsH-mediated thylakoid membrane biogenesis and may enhance photoinhibition. Seems not involved in chloroplastic protein import. Probable component of the TIC-associated stromal import motor involved in inner membrane translocation. Has an ATPase activity, but no ADPase activity. Interacts with transit peptides with a positional preference. Localization of the signal sequence at the N-terminal end of a protein seems mandatory for interaction to take place. This is Chaperone protein ClpC2, chloroplastic from Arabidopsis thaliana (Mouse-ear cress).